The sequence spans 351 residues: Heat-inducible transcription repressor HrcA (351 aa).

Belongs to the HrcA family.

In terms of biological role, negative regulator of class I heat shock genes (grpE-dnaK-dnaJ and groELS operons). Prevents heat-shock induction of these operons. This Mycoplasma pneumoniae (strain ATCC 29342 / M129 / Subtype 1) (Mycoplasmoides pneumoniae) protein is Heat-inducible transcription repressor HrcA.